The primary structure comprises 159 residues: uncharacterized protein (159 aa).

Transmembrane regions (helical) follow at residues 10 to 30 (FLSM…SLFF), 52 to 72 (MLIL…VILL), and 96 to 116 (LTLI…PFVT).

Its subcellular location is the membrane. This is an uncharacterized protein from Escherichia coli (strain K12).